A 744-amino-acid chain; its full sequence is Tripartite motif-containing protein 3 (744 aa).

An N-acetylalanine modification is found at Ala2. Residues 2–290 are interaction with KIF21B; that stretch reads AKREDSPGPE…LAAQAFPERP (289 aa). The residue at position 7 (Ser7) is a Phosphoserine. Residues 22–63 form an RING-type zinc finger; that stretch reads CSICLDRYRCPKVLPCLHTFCERCLQNYIPPQSLTLSCPVCR. A B box-type zinc finger spans residues 110–151; that stretch reads GRPLSCPNHEGKTMEFYCEACETAMCGECRAGEHREHGTVLL. Zn(2+) is bound by residues Cys115, His118, Cys138, and His143. Residues 153-224 adopt a coiled-coil conformation; the sequence is DVVEQHKAAL…RKQALVSDLE (72 aa). A Filamin repeat occupies 317–418; sequence TTSATAHETV…VRGSPFRVRA (102 aa). The tract at residues 419 to 464 is disordered; it reads LRPGDLPPSPDDVKRRVKSPGGPGSHVRQKAVRRPSSMYSTGGKRK. The residue at position 427 (Ser427) is a Phosphoserine. NHL repeat units lie at residues 473 to 516, 520 to 563, 564 to 605, 609 to 652, 656 to 699, and 700 to 743; these read VFRV…FSNE, KFRF…FSPE, GKFK…FQPN, VGRF…YSAD, LFKF…FDSS, and GSFL…YRYL.

This sequence belongs to the TRIM/RBCC family. In terms of assembly, forms homooligomers. Interacts with TRIM2; this interaction reduces TRIM2 activity. Associates with myosin-Vb (MYO5B) and alpha-actinin-4 (ACTN4). Component of the CART complex, at least composed of ACTN4, HGS/HRS, MYO5B and TRIM3. Interacts with ZFYVE28/LST2. Interacts with KIF21B.

It localises to the cytoplasm. It is found in the early endosome. The protein localises to the golgi apparatus. Its subcellular location is the trans-Golgi network. The protein resides in the cell projection. It localises to the dendrite. It carries out the reaction S-ubiquitinyl-[E2 ubiquitin-conjugating enzyme]-L-cysteine + [acceptor protein]-L-lysine = [E2 ubiquitin-conjugating enzyme]-L-cysteine + N(6)-ubiquitinyl-[acceptor protein]-L-lysine.. E3 ubiquitin ligase that plays essential roles in neuronal functions such as regulation of neuronal plasticity, learning, and memory. In addition to its neuronal functions, participates in other biological processes such as innate immunity or cell cycle regulation. Component of the cytoskeleton-associated recycling or transport complex in neurons, polyubiquitinates gamma-actin, thus regulating neuronal plasticity, learning, and memory. Ubiquitinates postsynaptic scaffold GKAP, a neuronal substrate involved in synaptic remodeling and thereby modulates dendritic spine morphology. Positively regulates motility of microtubule-dependent motor protein KIF21B. Induces growth arrest via its RING-dependent E3 ligase activity and ubiquinates CDKN1A. Positively regulates TLR3-mediated signaling by mediating 'Lys-63'-linked polyubiquitination of TLR3. In turn, promotes the recognition and sorting of polyubiquitinated TLR3 by the ESCRT complexes. In Mus musculus (Mouse), this protein is Tripartite motif-containing protein 3 (Trim3).